The primary structure comprises 94 residues: ESAT-6-like protein EsxO (94 aa).

It belongs to the WXG100 family. ESAT-6 subfamily. In terms of assembly, forms a complex with EsxP.

It is found in the secreted. This is ESAT-6-like protein EsxO from Mycobacterium tuberculosis (strain CDC 1551 / Oshkosh).